We begin with the raw amino-acid sequence, 209 residues long: Uracil phosphoribosyltransferase (209 aa).

Residues Arg-79, Arg-104, and 131–139 contribute to the 5-phospho-alpha-D-ribose 1-diphosphate site; that span reads DPMLATGNS. Uracil contacts are provided by residues Ile-194 and 199-201; that span reads GDA. Residue Asp-200 participates in 5-phospho-alpha-D-ribose 1-diphosphate binding.

The protein belongs to the UPRTase family. Requires Mg(2+) as cofactor.

The enzyme catalyses UMP + diphosphate = 5-phospho-alpha-D-ribose 1-diphosphate + uracil. The protein operates within pyrimidine metabolism; UMP biosynthesis via salvage pathway; UMP from uracil: step 1/1. With respect to regulation, allosterically activated by GTP. Functionally, catalyzes the conversion of uracil and 5-phospho-alpha-D-ribose 1-diphosphate (PRPP) to UMP and diphosphate. The protein is Uracil phosphoribosyltransferase of Rhizobium rhizogenes (strain K84 / ATCC BAA-868) (Agrobacterium radiobacter).